Consider the following 370-residue polypeptide: Tyrosyl-DNA phosphodiesterase 2 (370 aa).

M1 is modified (N-acetylmethionine). A disordered region spans residues 1 to 32; sequence MASGSSSDAAEPAGPAGRAASAPEAAQAEEDR. Low complexity predominate over residues 9–26; sequence AAEPAGPAGRAASAPEAA. K34 is covalently cross-linked (Glycyl lysine isopeptide (Lys-Gly) (interchain with G-Cter in SUMO2)). T99 carries the post-translational modification Phosphothreonine; by ACVR1B. The interaction with 5' end of substrate DNA stretch occupies residues 130–134; it reads NIDGL. Mg(2+)-binding residues include D132 and E162. Positions 236-241 are interaction with 5' end of substrate DNA; sequence HLESTR. The active-site Proton donor/acceptor is the D272. 2 interaction with 5' end of substrate DNA regions span residues 274 to 276 and 315 to 321; these read NLR and LRIPAAY.

This sequence belongs to the CCR4/nocturin family. As to quaternary structure, interacts with TRAF2, TRAF3, TRAF5, TRAF6, TNFRSF8/CD30, TNFRSF5/CD40, TNFRSF1B/TNF-R75, ETS1, ETS2, FLI1, SMAD3 and ACVR1B/ALK4. Mg(2+) is required as a cofactor. Requires Mn(2+) as cofactor. Post-translationally, ubiquitinated by TRAF6. As to expression, widely expressed. Expressed in whole brain, cerebellum, quiescent cortical astrocytes and cerebellar granule neurons.

The protein localises to the nucleus. It localises to the PML body. Its subcellular location is the nucleolus. The protein resides in the cytoplasm. In terms of biological role, DNA repair enzyme that can remove a variety of covalent adducts from DNA through hydrolysis of a 5'-phosphodiester bond, giving rise to DNA with a free 5' phosphate. Catalyzes the hydrolysis of dead-end complexes between DNA and the topoisomerase 2 (TOP2) active site tyrosine residue. The 5'-tyrosyl DNA phosphodiesterase activity can enable the repair of TOP2-induced DNA double-strand breaks/DSBs without the need for nuclease activity, creating a 'clean' DSB with 5'-phosphate termini that are ready for ligation. Thereby, protects the transcription of many genes involved in neurological development and maintenance from the abortive activity of TOP2. Hydrolyzes 5'-phosphoglycolates on protruding 5' ends on DSBs due to DNA damage by radiation and free radicals. Has preference for single-stranded DNA or duplex DNA with a 4 base pair overhang as substrate. Also has 3'-tyrosyl DNA phosphodiesterase activity, but less efficiently and much slower than TDP1. Constitutes the major if not only 5'-tyrosyl-DNA phosphodiesterase in cells. Also acts as an adapter by participating in the specific activation of MAP3K7/TAK1 in response to TGF-beta: associates with components of the TGF-beta receptor-TRAF6-TAK1 signaling module and promotes their ubiquitination dependent complex formation. Involved in non-canonical TGF-beta induced signaling routes. May also act as a negative regulator of ETS1 and may inhibit NF-kappa-B activation. Acts as a regulator of ribosome biogenesis following stress. This chain is Tyrosyl-DNA phosphodiesterase 2 (Tdp2), found in Mus musculus (Mouse).